The sequence spans 256 residues: Sec-independent protein translocase protein TatC (256 aa).

6 helical membrane passes run 25 to 45, 77 to 97, 117 to 137, 158 to 178, 195 to 215, and 217 to 237; these read VICV…IYHF, AIVA…AFIA, ILFY…VFSF, FALA…AIIL, PYII…DVFS, and TLLA…ARFY.

It belongs to the TatC family. As to quaternary structure, the Tat system comprises two distinct complexes: a TatABC complex, containing multiple copies of TatA, TatB and TatC subunits, and a separate TatA complex, containing only TatA subunits. Substrates initially bind to the TatABC complex, which probably triggers association of the separate TatA complex to form the active translocon.

It is found in the cell inner membrane. In terms of biological role, part of the twin-arginine translocation (Tat) system that transports large folded proteins containing a characteristic twin-arginine motif in their signal peptide across membranes. Together with TatB, TatC is part of a receptor directly interacting with Tat signal peptides. This chain is Sec-independent protein translocase protein TatC, found in Haemophilus influenzae (strain ATCC 51907 / DSM 11121 / KW20 / Rd).